The primary structure comprises 233 residues: MSSYFVNSTFPVSLPGGQDSLLGQIPLYSSGYTDPLRHYSNAATYGAANMQEKVYPASYYQQTGAAAIYGRAGGGAPCEYNPVGTFYKETEGSCAFSSRDDQPLFVTQEHQQRKVECPEQSVSMGSSIDDKSSTLIYPWMQRMNACSAGPFGNSGRRGRQTYTRYQTLELEKEFHFNRYLTRRRRIEISHALCLTERQIKIWFQNRRMKWKKENKLLNPSKTPEEEEEAEKKS.

An Antp-type hexapeptide motif is present at residues Ile-136–Gln-141. Positions Gly-155–Asn-214 form a DNA-binding region, homeobox. The disordered stretch occupies residues Glu-213 to Ser-233. Residues Glu-224–Ser-233 are compositionally biased toward acidic residues.

The protein belongs to the Antp homeobox family.

The protein resides in the nucleus. Sequence-specific transcription factor which is part of a developmental regulatory system that provides cells with specific positional identities on the anterior-posterior axis. This chain is Homeobox protein Hox-B6b (hoxb6b), found in Takifugu rubripes (Japanese pufferfish).